The sequence spans 283 residues: Peflin (283 aa).

8 repeat units span residues 21–30 (PQTNYYGGQQ), 36–44 (QPAASYGRP), 45–54 (APGAPYGSPP), 55–62 (SGGVYGHP), 71–79 (APGGPYGGQ), 80–87 (APGGPYSV), 88–95 (PGSTPYGS), and 96–104 (QQHGSYGQG). Residues 21–104 (PQTNYYGGQQ…SQQHGSYGQG (84 aa)) are 8 X 9 AA approximate tandem repeat of [AP]-P-G-G-P-Y-G-G-P-P. Residues 37 to 70 (PAASYGRPAPGAPYGSPPSGGVYGHPVPGSAAPG) are compositionally biased toward low complexity. Positions 37-113 (PAASYGRPAP…GAPAGNIPPG (77 aa)) are disordered. The span at 71–81 (APGGPYGGQAP) shows a compositional bias: gly residues. A compositionally biased stretch (low complexity) spans 93–104 (YGSQQHGSYGQG). EF-hand domains follow at residues 113–148 (GVDPEAFSWFQTVDTDHSGYISLKELKQALVNTNWS), 154–179 (TCTMMMNMFDKSNSGRIDMFGFSALW), 180–215 (RFIQQWRNLFQQYDRDRSGSINQGELHQALCQMGYQ), 216–252 (LSPQFVQIVMSRYAQRSAQPGLQLDRFIQICTQLQSM), and 253–282 (TEAFREKDTGQIGTAKLSYEDFITMTTTRL). 5 residues coordinate Ca(2+): Asp126, Asp128, Ser130, Tyr132, and Glu137. 5 residues coordinate Ca(2+): Asp193, Asp195, Ser197, Ser199, and Glu204.

As to quaternary structure, heterodimer; heterodimerizes (via the EF-hand 5) with pdcd6.

Its subcellular location is the cytoplasm. The protein localises to the endoplasmic reticulum. The protein resides in the membrane. It localises to the cytoplasmic vesicle. It is found in the COPII-coated vesicle membrane. Functionally, calcium-binding protein that acts as an adapter that bridges unrelated proteins or stabilizes weak protein-protein complexes in response to calcium. Acts as a negative regulator of ER-Golgi transport. The sequence is that of Peflin from Xenopus laevis (African clawed frog).